We begin with the raw amino-acid sequence, 353 residues long: Lactosylceramide 4-alpha-galactosyltransferase (353 aa).

Residues 1 to 22 are Cytoplasmic-facing; sequence MSKPPDLLLRLLRGAPRQRVCT. A helical; Signal-anchor for type II membrane protein membrane pass occupies residues 23-43; sequence LFIIGFKFTFFVSIMIYWHVV. At 44 to 353 the chain is on the lumenal side; that stretch reads GEPKEKGQLY…TTHEAMKMYL (310 aa). An N-linked (GlcNAc...) asparagine glycan is attached at N121. Residues 192-194 carry the DXD motif motif; sequence DTD. N203 is a glycosylation site (N-linked (GlcNAc...) asparagine).

Belongs to the glycosyltransferase 32 family.

The protein localises to the golgi apparatus membrane. The catalysed reaction is a beta-D-Gal-(1-&gt;4)-beta-D-Glc-(1&lt;-&gt;1)-Cer(d18:1(4E)) + UDP-alpha-D-galactose = a globoside Gb3Cer (d18:1(4E)) + UDP + H(+). It carries out the reaction a beta-D-Gal-(1&lt;-&gt;1')-ceramide + UDP-alpha-D-galactose = alpha-D-Gal-(1-&gt;4)-beta-D-Gal-(1&lt;-&gt;1')-Cer + UDP + H(+). The protein operates within glycolipid biosynthesis. In terms of biological role, catalyzes the transfer of galactose from UDP-alpha-D-galactose to lactosylceramide/beta-D-galactosyl-(1-&gt;4)-beta-D-glucosyl-(1&lt;-&gt;1)-ceramide(d18:1(4E)) to produce globotriaosylceramide/globoside Gb3Cer (d18:1(4E)). Also able to transfer galactose to galactosylceramide/beta-D-Gal-(1&lt;-&gt;1')-Cer. Globoside Gb3Cer is a glycosphingolipid of the globo serie, one of the major types of neutral root structures of glycosphingolipids, that constitute a significant portion of mammalian cell membranes. This is Lactosylceramide 4-alpha-galactosyltransferase (A4GALT) from Pan troglodytes (Chimpanzee).